Reading from the N-terminus, the 316-residue chain is Fe-S cluster assembly protein dre2 (316 aa).

The tract at residues 1 to 128 (MAPRCLLIGT…KPEQEEPVSI (128 aa)) is N-terminal SAM-like domain. Residues 129-208 (PLKFGKNKAN…EDDLITEADM (80 aa)) form a linker region. Positions 141-177 (SATNGTNGAVNPDGSVPLNLNRKRDQPEPVKPAGVGF) are disordered. C218, C229, C232, and C234 together coordinate [2Fe-2S] cluster. The segment at 218–234 (CQPKPGKRRRACKDCTC) is fe-S binding site A. [4Fe-4S] cluster-binding residues include C279, C282, C290, and C293. 2 short sequence motifs (cx2C motif) span residues 279–282 (CGNC) and 290–293 (CDGC). The tract at residues 279–293 (CGNCALGDAFRCDGC) is fe-S binding site B.

The protein belongs to the anamorsin family. In terms of assembly, monomer. Interacts with TAH18. Interacts with MIA40. [2Fe-2S] cluster is required as a cofactor. The cofactor is [4Fe-4S] cluster.

It is found in the cytoplasm. The protein resides in the mitochondrion intermembrane space. Its function is as follows. Component of the cytosolic iron-sulfur (Fe-S) protein assembly (CIA) machinery required for the maturation of extramitochondrial Fe-S proteins. Part of an electron transfer chain functioning in an early step of cytosolic Fe-S biogenesis, facilitating the de novo assembly of a [4Fe-4S] cluster on the scaffold complex CFD1-NBP35. Electrons are transferred to DRE2 from NADPH via the FAD- and FMN-containing protein TAH18. TAH18-DRE2 are also required for the assembly of the diferric tyrosyl radical cofactor of ribonucleotide reductase (RNR), probably by providing electrons for reduction during radical cofactor maturation in the catalytic small subunit RNR2. The polypeptide is Fe-S cluster assembly protein dre2 (Pyrenophora tritici-repentis (strain Pt-1C-BFP) (Wheat tan spot fungus)).